The following is a 208-amino-acid chain: Intraflagellar transport protein 43 homolog (208 aa).

Position 1 is an N-acetylmethionine (M1). Positions 18–65 (SRAKMGRRAQQESAQAENHLNGKNSSLTLTGETSSAKLPRCRQGGWAG) are disordered. Residues 28 to 53 (QESAQAENHLNGKNSSLTLTGETSSA) are compositionally biased toward polar residues. S78 bears the Phosphoserine mark.

The protein belongs to the IFT43 family. In terms of assembly, component of the IFT complex A (IFT-A) complex. IFT-A complex is divided into a core subcomplex composed of IFT122:IFT140:WDR19 which is associated with TULP3 and a peripheral subcomplex composed of IFT43:WDR35:TTC21B. Interacts directy with IFT122, WDR35 and TTC21B. As to expression, expressed in the retina, predominantly in the photoreceptor outer segment.

The protein localises to the cytoplasm. The protein resides in the cytoskeleton. Its subcellular location is the cell projection. It is found in the cilium. As a component of IFT complex A (IFT-A), a complex required for retrograde ciliary transport and entry into cilia of G protein-coupled receptors (GPCRs), it is involved in ciliogenesis. Involved in retrograde ciliary transport along microtubules from the ciliary tip to the base. In Homo sapiens (Human), this protein is Intraflagellar transport protein 43 homolog.